A 210-amino-acid chain; its full sequence is ATP-dependent Clp protease proteolytic subunit (210 aa).

Residue serine 106 is the Nucleophile of the active site. Histidine 131 is a catalytic residue.

This sequence belongs to the peptidase S14 family. As to quaternary structure, fourteen ClpP subunits assemble into 2 heptameric rings which stack back to back to give a disk-like structure with a central cavity, resembling the structure of eukaryotic proteasomes.

It localises to the cytoplasm. The enzyme catalyses Hydrolysis of proteins to small peptides in the presence of ATP and magnesium. alpha-casein is the usual test substrate. In the absence of ATP, only oligopeptides shorter than five residues are hydrolyzed (such as succinyl-Leu-Tyr-|-NHMec, and Leu-Tyr-Leu-|-Tyr-Trp, in which cleavage of the -Tyr-|-Leu- and -Tyr-|-Trp bonds also occurs).. Its function is as follows. Cleaves peptides in various proteins in a process that requires ATP hydrolysis. Has a chymotrypsin-like activity. Plays a major role in the degradation of misfolded proteins. This Bartonella tribocorum (strain CIP 105476 / IBS 506) protein is ATP-dependent Clp protease proteolytic subunit.